Consider the following 405-residue polypeptide: Mucosal addressin cell adhesion molecule 1 (405 aa).

Positions Met1 to Gly21 are cleaved as a signal peptide. Ig-like domains are found at residues Gln22–Tyr109 and Ala110–Lys227. Residues Gln22–Ser364 lie on the Extracellular side of the membrane. Intrachain disulfides connect Cys45/Cys91, Cys49/Cys95, and Cys132/Cys200. Residues Gln221 to Leu257 are mucin-like. Residues Asn230 and Asn253 are each glycosylated (N-linked (GlcNAc...) asparagine). The interval Thr255 to Gly275 is disordered. The Ig-like 3 domain occupies Pro258–Gln357. A disulfide bridge links Cys293 with Cys341. An N-linked (GlcNAc...) asparagine glycan is attached at Asn361. A helical membrane pass occupies residues Thr365–Tyr385. Residues Arg386–Leu405 are Cytoplasmic-facing.

In terms of assembly, homodimer. In terms of processing, O-glycosylated; contains syalic acid. The Ser/Thr-rich mucin-like domain may provide possible sites for O-glycosylation. In terms of tissue distribution, highly expressed on high endothelial venules (HEV) of organized intestinal lymphoid tissues like the Peyer patches and mesenteric lymph nodes, and in the lamina propria of the intestine. Some expression found in the spleen, and low levels of expression in the peripheral lymph nodes and the lactating mammary gland. No expression was detected in the liver, kidneys, lungs or in normal brain. Expressed as well in brain endothelioma cells, and mucosal tissues which are in a chronic state of inflammation, such as inflamed pancreas.

It localises to the membrane. Its function is as follows. Cell adhesion leukocyte receptor expressed by mucosal venules, helps to direct lymphocyte traffic into mucosal tissues including the Peyer patches and the intestinal lamina propria. It can bind both the integrin alpha-4/beta-7 and L-selectin, regulating both the passage and retention of leukocytes. Both isoform 1 and isoform 2 can adhere to integrin alpha-4/beta-7. Isoform 2, lacking the mucin-like domain, may be specialized in supporting integrin alpha-4/beta-7-dependent adhesion strengthening, independent of L-selectin binding. The polypeptide is Mucosal addressin cell adhesion molecule 1 (Madcam1) (Mus musculus (Mouse)).